Here is an 88-residue protein sequence, read N- to C-terminus: Cell division topological specificity factor (88 aa).

The protein belongs to the MinE family.

Prevents the cell division inhibition by proteins MinC and MinD at internal division sites while permitting inhibition at polar sites. This ensures cell division at the proper site by restricting the formation of a division septum at the midpoint of the long axis of the cell. In Herminiimonas arsenicoxydans, this protein is Cell division topological specificity factor.